Reading from the N-terminus, the 203-residue chain is Endo-type membrane-bound lytic murein transglycosylase A (203 aa).

An N-terminal signal peptide occupies residues 1-15; sequence MKLRWLLILVVFLAG. Cys16 carries the N-palmitoyl cysteine lipid modification. Residue Cys16 is the site of S-diacylglycerol cysteine attachment.

This sequence belongs to the transglycosylase Slt family.

It is found in the cell outer membrane. The catalysed reaction is Endolytic cleavage of the (1-&gt;4)-beta-glycosidic linkage between N-acetylmuramic acid (MurNAc) and N-acetylglucosamine (GlcNAc) residues in peptidoglycan with concomitant formation of a 1,6-anhydrobond in the MurNAc residue.. Murein-degrading enzyme. May play a role in recycling of muropeptides during cell elongation and/or cell division. Preferentially cleaves at a distance of more than two disaccharide units from the ends of the glycan chain. This chain is Endo-type membrane-bound lytic murein transglycosylase A, found in Klebsiella pneumoniae (strain 342).